A 276-amino-acid polypeptide reads, in one-letter code: NH(3)-dependent NAD(+) synthetase (276 aa).

Residue 43-50 coordinates ATP; that stretch reads GISGGVDS. Asp49 contributes to the Mg(2+) binding site. Position 146 (Arg146) interacts with deamido-NAD(+). Thr166 contacts ATP. Glu171 is a binding site for Mg(2+). Lys179 and Asp186 together coordinate deamido-NAD(+). ATP-binding residues include Lys195 and Thr217. 266–267 is a binding site for deamido-NAD(+); it reads HK.

It belongs to the NAD synthetase family. Homodimer.

The enzyme catalyses deamido-NAD(+) + NH4(+) + ATP = AMP + diphosphate + NAD(+) + H(+). It functions in the pathway cofactor biosynthesis; NAD(+) biosynthesis; NAD(+) from deamido-NAD(+) (ammonia route): step 1/1. In terms of biological role, catalyzes the ATP-dependent amidation of deamido-NAD to form NAD. Uses ammonia as a nitrogen source. The protein is NH(3)-dependent NAD(+) synthetase of Aliivibrio fischeri (strain MJ11) (Vibrio fischeri).